The chain runs to 126 residues: Large ribosomal subunit protein bL19 (126 aa).

Belongs to the bacterial ribosomal protein bL19 family.

Its function is as follows. This protein is located at the 30S-50S ribosomal subunit interface and may play a role in the structure and function of the aminoacyl-tRNA binding site. In Prochlorococcus marinus (strain MIT 9312), this protein is Large ribosomal subunit protein bL19.